The chain runs to 365 residues: Probable UDP-arabinopyranose mutase 1 (365 aa).

The DXD motif signature appears at 100–102; the sequence is DDD. Residue Arg148 is glycosylated (N-linked (Glc...) arginine).

The protein belongs to the RGP family. Homopentamer or homohexamer. Mn(2+) serves as cofactor. It depends on Mg(2+) as a cofactor. Reversibly glycosylated by UDP-glucose, UDP-xylose and UDP-galactose, but not UDP-mannose. In terms of tissue distribution, expressed in all tissues tested, including root, tuber, leaf, petiole, shoot, stolon and stem.

It is found in the secreted. It localises to the cell wall. The protein localises to the cell junction. Its subcellular location is the plasmodesma. The protein resides in the golgi apparatus. The enzyme catalyses UDP-beta-L-arabinofuranose = UDP-beta-L-arabinopyranose. Functionally, probable UDP-L-arabinose mutase involved in the biosynthesis of cell wall non-cellulosic polysaccharides. Was initially shown to possess an autoglycosylating activity which is dependent on the presence of UDP-glucose and manganese. This is Probable UDP-arabinopyranose mutase 1 from Solanum tuberosum (Potato).